A 199-amino-acid chain; its full sequence is HTH-type transcriptional regulator BetI (199 aa).

An HTH tetR-type domain is found at 8–68 (EIRKPQLVKA…ETMREILRQL (61 aa)). The H-T-H motif DNA-binding region spans 31 to 50 (SISLISKEAGVSTGIINHYF).

Its pathway is amine and polyamine biosynthesis; betaine biosynthesis via choline pathway [regulation]. Repressor involved in the biosynthesis of the osmoprotectant glycine betaine. It represses transcription of the choline transporter BetT and the genes of BetAB involved in the synthesis of glycine betaine. The chain is HTH-type transcriptional regulator BetI from Vibrio campbellii (strain ATCC BAA-1116).